Here is a 377-residue protein sequence, read N- to C-terminus: Sterol 24-C-methyltransferase erg6 (377 aa).

The protein belongs to the class I-like SAM-binding methyltransferase superfamily. Erg6/SMT family.

The protein resides in the microsome. It is found in the mitochondrion. It carries out the reaction lanosterol + S-adenosyl-L-methionine = eburicol + S-adenosyl-L-homocysteine + H(+). Its pathway is steroid metabolism; ergosterol biosynthesis. With respect to regulation, specific and total activity is decreased in presence of alpha-bisabolol. Functionally, sterol 24-C-methyltransferase; part of the third module of ergosterol biosynthesis pathway that includes the late steps of the pathway. Methylates lanosterol at C-24 to produce eburicol. The third module or late pathway involves the ergosterol synthesis itself through consecutive reactions that mainly occur in the endoplasmic reticulum (ER) membrane. Firstly, the squalene synthase erg9 catalyzes the condensation of 2 farnesyl pyrophosphate moieties to form squalene, which is the precursor of all steroids. Squalene synthase is crucial for balancing the incorporation of farnesyl diphosphate (FPP) into sterol and nonsterol isoprene synthesis. Secondly, squalene is converted into lanosterol by the consecutive action of the squalene epoxidase erg1 and the lanosterol synthase erg7. Then, the delta(24)-sterol C-methyltransferase erg6 methylates lanosterol at C-24 to produce eburicol. Eburicol is the substrate of the sterol 14-alpha demethylase encoded by cyp51A and cyp51B, to yield 4,4,24-trimethyl ergosta-8,14,24(28)-trienol. The C-14 reductase erg24 then reduces the C14=C15 double bond which leads to 4,4-dimethylfecosterol. A sequence of further demethylations at C-4, involving the C-4 demethylation complex containing the C-4 methylsterol oxidases erg25A or erg25B, the sterol-4-alpha-carboxylate 3-dehydrogenase erg26 and the 3-keto-steroid reductase erg27, leads to the production of fecosterol via 4-methylfecosterol. The C-8 sterol isomerase erg2 then catalyzes the reaction which results in unsaturation at C-7 in the B ring of sterols and thus converts fecosterol to episterol. The sterol-C5-desaturase erg3B then catalyzes the introduction of a C-5 double bond in the B ring to produce 5-dehydroepisterol. The 2 other sterol-C5-desaturases, erg3A and erg3C, seem to be less important in ergosterol biosynthesis. The C-22 sterol desaturase erg5 further converts 5-dehydroepisterol into ergosta-5,7,22,24(28)-tetraen-3beta-ol by forming the C-22(23) double bond in the sterol side chain. Finally, ergosta-5,7,22,24(28)-tetraen-3beta-ol is substrate of the C-24(28) sterol reductases erg4A and erg4B to produce ergosterol. Possible alternative sterol biosynthetic pathways might exist from fecosterol to ergosterol, depending on the activities of the erg3 isoforms. This is Sterol 24-C-methyltransferase erg6 from Aspergillus fumigatus (strain ATCC MYA-4609 / CBS 101355 / FGSC A1100 / Af293) (Neosartorya fumigata).